The chain runs to 198 residues: GTP cyclohydrolase-2 (198 aa).

49-53 is a binding site for GTP; the sequence is RVHSE. The Zn(2+) site is built by cysteine 54, cysteine 65, and cysteine 67. GTP-binding positions include glutamine 70, 92–94, and threonine 114; that span reads EGR. Aspartate 126 acts as the Proton acceptor in catalysis. The Nucleophile role is filled by arginine 128. Residues threonine 149 and lysine 154 each coordinate GTP.

This sequence belongs to the GTP cyclohydrolase II family. In terms of assembly, homodimer. The cofactor is Zn(2+).

It catalyses the reaction GTP + 4 H2O = 2,5-diamino-6-hydroxy-4-(5-phosphoribosylamino)-pyrimidine + formate + 2 phosphate + 3 H(+). Its pathway is cofactor biosynthesis; riboflavin biosynthesis; 5-amino-6-(D-ribitylamino)uracil from GTP: step 1/4. Its function is as follows. Catalyzes the conversion of GTP to 2,5-diamino-6-ribosylamino-4(3H)-pyrimidinone 5'-phosphate (DARP), formate and pyrophosphate. This chain is GTP cyclohydrolase-2, found in Escherichia fergusonii (strain ATCC 35469 / DSM 13698 / CCUG 18766 / IAM 14443 / JCM 21226 / LMG 7866 / NBRC 102419 / NCTC 12128 / CDC 0568-73).